We begin with the raw amino-acid sequence, 227 residues long: UMP-CMP kinase (227 aa).

35-40 (GAGKGT) is a binding site for ATP. The interval 55–85 (SAGDLLRAEQHREGSEYGQLIQTCIKEGSIV) is NMP. A ribonucleoside 5'-phosphate-binding positions include arginine 61, 83 to 85 (SIV), 122 to 125 (GFPR), and glutamine 129. Residues 159 to 169 (ERGKTSGREDD) are LID. Arginine 160 is a binding site for ATP. A ribonucleoside 5'-phosphate-binding residues include arginine 166 and arginine 177. ATP is bound at residue valine 205.

It belongs to the adenylate kinase family. UMP-CMP kinase subfamily. As to quaternary structure, monomer. It depends on Mg(2+) as a cofactor.

It is found in the cytoplasm. The protein resides in the nucleus. It catalyses the reaction UMP + ATP = UDP + ADP. In terms of biological role, catalyzes the phosphorylation of pyrimidine nucleoside monophosphates at the expense of ATP. Plays an important role in de novo pyrimidine nucleotide biosynthesis. Has preference for UMP and CMP as phosphate acceptors, but can also use AMP and dCMP to a lesser extent. May play a role during the formation of basidiospores in the gill tissue. This is UMP-CMP kinase (uck1) from Lentinula edodes (Shiitake mushroom).